Here is an 878-residue protein sequence, read N- to C-terminus: E3 ubiquitin-protein ligase BRE1-like 1 (878 aa).

The interval 1–21 (MASTGEPDRKRRHFSSISPSE) is disordered. 4 coiled-coil regions span residues 48-76 (QNLK…IKEK), 200-261 (QLAL…ELQQ), 293-382 (SDRE…EKLQ), and 537-624 (LDMY…ILKS). Residues 826–865 (CKACNDRPKEVVITKCYHLFCNPCVQKLTGTRQKKCPTCS) form an RING-type zinc finger.

This sequence belongs to the BRE1 family. May act as a tetramer consisting of two copies of HUB1 and two copies of HUB2. Interacts with MED21. As to expression, ubiquitously expressed.

The protein resides in the nucleus. The enzyme catalyses S-ubiquitinyl-[E2 ubiquitin-conjugating enzyme]-L-cysteine + [acceptor protein]-L-lysine = [E2 ubiquitin-conjugating enzyme]-L-cysteine + N(6)-ubiquitinyl-[acceptor protein]-L-lysine.. It participates in protein modification; protein ubiquitination. E3 ubiquitin-protein ligase that monoubiquitinates H2B to form H2BK143ub1. H2BK143ub1 gives a specific tag for epigenetic transcriptional activation and is also prerequisite for H3K4me and maybe H3K79me. It thereby plays a central role in histone code and gene regulation. Forms a ubiquitin ligase complex in cooperation with the E2 enzyme UBC2/RAD6. Required for the regulation of flowering time and defense against necrotrophic fungal pathogens. Involved in the control of seed dormancy and germination. This chain is E3 ubiquitin-protein ligase BRE1-like 1 (HUB1), found in Arabidopsis thaliana (Mouse-ear cress).